The sequence spans 298 residues: Syntaxin-125 (298 aa).

M1 is subject to N-acetylmethionine. The Cytoplasmic portion of the chain corresponds to 1 to 274 (MNDLFSNSFK…KSSRKWTCYA (274 aa)). Positions 25–155 (TMNLDKFFED…NEYKETVERR (131 aa)) form a coiled coil. In terms of domain architecture, t-SNARE coiled-coil homology spans 198-260 (ISEIQERHDA…RRGTDQLQDA (63 aa)). Residues 275–295 (IILFIVIFILLLIPLLPHIML) form a helical; Anchor for type IV membrane protein membrane-spanning segment. Residues 296–298 (MLK) lie on the Vesicular side of the membrane.

The protein belongs to the syntaxin family. In terms of assembly, part of the t-SNARE complex.

It localises to the membrane. In terms of biological role, vesicle trafficking protein that functions in the secretory pathway. The chain is Syntaxin-125 (SYP125) from Arabidopsis thaliana (Mouse-ear cress).